Here is a 486-residue protein sequence, read N- to C-terminus: MTHYIQGQWHAGKGHDVASINPANAQTIWTGKTATAEQVNAAVDAAREAQFDWFMLGFDARLAIVEAYRSQLEANKAELAETIAQETGKPQWETATEVGAMIGKIALSAAAYNKRTGTEANDTPAGRAVIRHKPHGVVAVFGPYNFPGHLPNGHIVPALLAGNTVIFKPSELTPKVAELMVSLWDKAGLPAGVLNLVQGEVDTGKALASHPQLDGLFFTGSSRTGHFLHQQYAGHPGKILALEMGGNNPLIIKGVQDIKAAVHDILQSAYISSGQRCTCARRLYVEQGEQGDALIAMLAAAVKQIKVGPWNAQPQPFMGSMISETAAKGMVAAQTNLQNLGGVSLVELTHLEAGTGLVSPGLIDVTAIDVLPDEEYFGPLLQLVRYSDFDQAIKLANQTRYGLSAGLLADSREDYDYFLARIRAGIVNWNKQITGASGAAPFGGVGASGNHRASAFYAADYCAYPVASVEADAVSLPATLSPGLSL.

Residue 220–225 (GSSRTG) coordinates NAD(+). Active-site residues include Glu243 and Cys277.

The protein belongs to the aldehyde dehydrogenase family. AstD subfamily.

The catalysed reaction is N-succinyl-L-glutamate 5-semialdehyde + NAD(+) + H2O = N-succinyl-L-glutamate + NADH + 2 H(+). Its pathway is amino-acid degradation; L-arginine degradation via AST pathway; L-glutamate and succinate from L-arginine: step 4/5. Its function is as follows. Catalyzes the NAD-dependent reduction of succinylglutamate semialdehyde into succinylglutamate. This is N-succinylglutamate 5-semialdehyde dehydrogenase from Shewanella baltica (strain OS155 / ATCC BAA-1091).